The sequence spans 118 residues: Large ribosomal subunit protein mL53 (118 aa).

Positions 99–118 (AAAASAPGADKVAPGTSTRR) are disordered.

The protein belongs to the mitochondrion-specific ribosomal protein mL53 family. Component of the mitochondrial ribosome large subunit (39S) which comprises a 16S rRNA and about 50 distinct proteins.

It localises to the mitochondrion. The protein is Large ribosomal subunit protein mL53 (Mrpl53) of Mus musculus (Mouse).